Reading from the N-terminus, the 81-residue chain is Putative membrane protein insertion efficiency factor (81 aa).

This sequence belongs to the UPF0161 family.

It is found in the cell inner membrane. Functionally, could be involved in insertion of integral membrane proteins into the membrane. The protein is Putative membrane protein insertion efficiency factor of Pseudomonas savastanoi pv. phaseolicola (strain 1448A / Race 6) (Pseudomonas syringae pv. phaseolicola (strain 1448A / Race 6)).